The sequence spans 182 residues: MSDNLALHGTTILCLKKNEEIIIAADGQVSHGNTVLKSTARKLRTIANNKIIAGFAGSTADGLALFEKLEVKIEQHKHNLLRSAVELAKDWRSDKYLRRLEAMMIVADRNHILILTGNGDVVEPENNVAAIGSGGLFALSAARALMSYDNPLTAEEIALKSMNIAADLCVFSNHNIITEKVV.

Threonine 10 is a catalytic residue. Residues alanine 166, cysteine 169, and serine 172 each contribute to the Na(+) site.

The protein belongs to the peptidase T1B family. HslV subfamily. In terms of assembly, a double ring-shaped homohexamer of HslV is capped on each side by a ring-shaped HslU homohexamer. The assembly of the HslU/HslV complex is dependent on binding of ATP.

Its subcellular location is the cytoplasm. The catalysed reaction is ATP-dependent cleavage of peptide bonds with broad specificity.. Its activity is regulated as follows. Allosterically activated by HslU binding. In terms of biological role, protease subunit of a proteasome-like degradation complex believed to be a general protein degrading machinery. The protein is ATP-dependent protease subunit HslV of Rickettsia bellii (strain OSU 85-389).